A 500-amino-acid polypeptide reads, in one-letter code: Serine/threonine protein phosphatase 2A 57 kDa regulatory subunit B' kappa isoform (500 aa).

The tract at residues 1 to 53 (MFKQFLSKLPRKSSKSDSGELNRSSSGPVSSPVQRSGTSGGGSGPVRSNSGKR) is disordered. Positions 21 to 37 (LNRSSSGPVSSPVQRSG) are enriched in polar residues.

This sequence belongs to the phosphatase 2A regulatory subunit B56 family. PP2A consists of a common heteromeric enzyme, composed of a catalytic subunit (subunits C), a constant regulatory subunit (subunit A), and a variety of regulatory subunits such as subunits B (the R2/B/PR55/B55, R3/B''/PR72/PR130/PR59 and R5/B'/B56 families).

Its subcellular location is the cytoplasm. Its function is as follows. The B regulatory subunit may modulate substrate selectivity and catalytic activity, and may also direct the localization of the catalytic enzyme to a particular subcellular compartment. The polypeptide is Serine/threonine protein phosphatase 2A 57 kDa regulatory subunit B' kappa isoform (B'KAPPA) (Arabidopsis thaliana (Mouse-ear cress)).